The chain runs to 376 residues: tRNA-specific 2-thiouridylase MnmA (376 aa).

Residues 14-21 and M40 contribute to the ATP site; that span reads GMSGGVDS. An interaction with target base in tRNA region spans residues 100–102; that stretch reads NPD. C105 acts as the Nucleophile in catalysis. C105 and C202 are disulfide-bonded. G129 provides a ligand contact to ATP. The interval 152 to 154 is interaction with tRNA; that stretch reads KDQ. C202 functions as the Cysteine persulfide intermediate in the catalytic mechanism. The interaction with tRNA stretch occupies residues 315 to 316; it reads RY.

Belongs to the MnmA/TRMU family.

Its subcellular location is the cytoplasm. It catalyses the reaction S-sulfanyl-L-cysteinyl-[protein] + uridine(34) in tRNA + AH2 + ATP = 2-thiouridine(34) in tRNA + L-cysteinyl-[protein] + A + AMP + diphosphate + H(+). Its function is as follows. Catalyzes the 2-thiolation of uridine at the wobble position (U34) of tRNA, leading to the formation of s(2)U34. This Lactococcus lactis subsp. cremoris (strain MG1363) protein is tRNA-specific 2-thiouridylase MnmA.